The following is a 483-amino-acid chain: Cobyric acid synthase (483 aa).

The GATase cobBQ-type domain occupies 251-438 (ALIVAVPMLP…LHGVFSADRF (188 aa)). Residue Cys333 is the Nucleophile of the active site. The active site involves His430.

This sequence belongs to the CobB/CobQ family. CobQ subfamily.

It functions in the pathway cofactor biosynthesis; adenosylcobalamin biosynthesis. In terms of biological role, catalyzes amidations at positions B, D, E, and G on adenosylcobyrinic A,C-diamide. NH(2) groups are provided by glutamine, and one molecule of ATP is hydrogenolyzed for each amidation. This chain is Cobyric acid synthase, found in Brucella melitensis biotype 2 (strain ATCC 23457).